Reading from the N-terminus, the 311-residue chain is MIERLNSPFLRAAALFTIVAFSSLISTAALAENNPSDTAKKFKVVTTFTIIQDIAQNIAGDVAVVESITKPGAEIHDYQPTPRDIVKAQSADLILWNGMNLERWFEKFFESIKDVPSAVVTAGITPLPIREGPYSGIANPHAWMSPSNALIYIENIRKALVEHDPAHAETYNRNAQAYAEKIKALDAPLRERLSRIPAEQRWLVTSEGAFSYLAKDYGFKEVYLWPINAEQQGIPQQVRHVIDIIRENKIPVVFSESTISDKPAKQVSKETGAQYGGVLYVDSLSGEKGPVPTYISLINMTVDTIAKGFGQ.

Residues 1–31 form the signal peptide; the sequence is MIERLNSPFLRAAALFTIVAFSSLISTAALA. Fe(2+) contacts are provided by H76, H141, E207, and D282.

The protein belongs to the bacterial solute-binding protein 9 family. In terms of assembly, monomer.

It localises to the periplasm. Part of the ATP-binding cassette (ABC) transport system YfeABC involved in iron import. Binds iron with high affinity and specificity and delivers it to the membrane permease for translocation into the cytoplasm. Also binds Mn(2+) and Zn(2+). The chain is Iron-binding protein YfeA (yfeA) from Yersinia pestis.